A 2151-amino-acid chain; its full sequence is Polycystin-1-like protein 3 (2151 aa).

A signal peptide spans 1-20 (MLLQRRSWLWLYIRIGVILG). Residues 25–1073 (RKPSIREQHG…IKLLLHVTNN (1049 aa)) are Extracellular-facing. The C-type lectin domain maps to 34–142 (GGNSCYQLNR…CIEKHHFICQ (109 aa)). Intrachain disulfides connect Cys-55–Cys-141 and Cys-116–Cys-133. A glycan (N-linked (GlcNAc...) asparagine) is linked at Asn-89. Positions 222 to 245 (SLTGRPQVTSDTLASSSPPQGTSD) are enriched in polar residues. Positions 222 to 609 (SLTGRPQVTS…SSSPPWPVIT (388 aa)) are disordered. A compositionally biased stretch (low complexity) spans 246-348 (TPASSSPPQV…ASSSPPQGTS (103 aa)). Polar residues-rich tracts occupy residues 349-363 (DTPASSSPPQGTLDT) and 371-600 (QGTS…TPAS). N-linked (GlcNAc...) asparagine glycosylation is found at Asn-566, Asn-579, Asn-592, Asn-913, and Asn-951. Residues 899-1061 (TSLNTSTDHF…FIVPRTVDVE (163 aa)) form the GAIN-B domain. Disulfide bonds link Cys-1011–Cys-1039 and Cys-1026–Cys-1041. The tract at residues 1011-1061 (CYFWDRYNRTWKSDGCQVGPKSTILKTQCLCDHLTFFSSDFFIVPRTVDVE) is GPS. The segment at 1045–1061 (TFFSSDFFIVPRTVDVE) is stachel. Residues 1074 to 1094 (PVGVSLLSSLLGFYILLAMWA) form a helical membrane-spanning segment. Over 1095-1283 (SRKDREDMQK…NQFTRVQRLS (189 aa)) the chain is Cytoplasmic. In terms of domain architecture, PLAT spans 1119–1236 (SHYLIQVYTG…GNCERDRVFT (118 aa)). The chain crosses the membrane as a helical span at residues 1284 to 1304 (CCMALLLCDMVINIMFWKMGG). The Extracellular segment spans residues 1305–1320 (TTAKRGTEQLGPLAVT). A helical transmembrane segment spans residues 1321-1341 (LSELLVSIQTSIILFPIHLIF). Topologically, residues 1342 to 1533 (GRLFQLIHPP…FCLFRWLKCS (192 aa)) are cytoplasmic. The chain crosses the membrane as a helical span at residues 1534 to 1554 (CWLLLGVISLASAFFITLYSL). The Extracellular portion of the chain corresponds to 1555–1575 (ELDKDQATSWVISMMLSVLQD). The chain crosses the membrane as a helical span at residues 1576–1596 (IFISQPIKVIFLTLLFSLMAN). Residues 1597–1665 (HMPWLNKDKE…KLTGGTLVQI (69 aa)) are Cytoplasmic-facing. A helical transmembrane segment spans residues 1666–1676 (LFLTLLMTTVY). Residues 1677 to 1892 (SAKDSSRFFL…SLTSLQSSER (216 aa)) lie on the Extracellular side of the membrane. Asn-1712 and Asn-1822 each carry an N-linked (GlcNAc) asparagine glycan. The chain crosses the membrane as a helical span at residues 1893-1921 (GFAWIVSQVVYYLLVCYYAFIQGCRLKRQ). Topologically, residues 1922 to 1930 (RLAFFTRKR) are cytoplasmic. The helical transmembrane segment at 1931–1949 (NLLDTSIVLISFSILGLSM) threads the bilayer. Residues 1950–1980 (QSLSLLHKKMQQYHCDRDRFISFYEALRVNS) are Extracellular-facing. Residues 1981-2002 (AVTHLRGFLLLFATVRVWDLLR) traverse the membrane as a helical segment. The Cytoplasmic portion of the chain corresponds to 2003-2019 (HHAQLQVINKTLSKAWD). A helical transmembrane segment spans residues 2020 to 2044 (EVLGFILIIVVLLSSYAMTFNLLFG). Residues 2043–2081 (FGWSISDYQSFFRSIVTVVGLLMGTSKHKEVIALYPILG) are channel pore-region. Topologically, residues 2045–2077 (WSISDYQSFFRSIVTVVGLLMGTSKHKEVIALY) are extracellular. The helical transmembrane segment at 2078-2097 (PILGSLLVLSSIILMGLVII) threads the bilayer. The Cytoplasmic portion of the chain corresponds to 2098-2151 (NLFVSAILIAFGKERKACEKEATLTDMLLQKLSSLLGIRLHQNPSEEHADNTGY).

Belongs to the polycystin family. As to quaternary structure, heterotetramer with PKD2L1, composed of 3 subunit of PKD2L1 and 1 subunit of PKD1L3. Autoproteolytically processed at the GPS region of the GAIN-B domain; this cleavage modulates receptor activity. As to expression, expressed in a subset of taste receptor cells (type III taste cells) distinct from those involved in bitter, sweet and umami taste. Expressed in circumvallate and foliate taste buds, but not in surrounding non-gustatory lingual epithelium cells. Expressed in testis.

It is found in the cell membrane. It carries out the reaction Ca(2+)(in) = Ca(2+)(out). It catalyses the reaction Na(+)(in) = Na(+)(out). The enzyme catalyses K(+)(in) = K(+)(out). The catalysed reaction is Mg(2+)(in) = Mg(2+)(out). The non-selective cation channel is gated following an off-response property by acid: gated open after the removal of acid stimulus, but not during acid application. Non-selective cation channel activity is inhibited by capsaicin. Regulation of non-selective cation channel activity by external Ca(2+) is bimodal, first sensitizing and subsequently inactivating the current. The apo (closed) heterotetramer has an asymmetric selectivity filter (SF) guarded by Lys-2069 in absence of Ca(2+). However, Ca(2+)-entrance to the SF vestibule is accompanied by a swing motion of Lys-2069 on PKD1L3. Its function is as follows. Pore-forming subunit of a heterotetrameric, non-selective cation channel that is permeable to Ca(2+). Also shows permeability towards NA(1+), K(+) and Mg(2+). Heterotetrameric complex channel is activated by external low pH and Ca(2+), but opens only when the extracellular pH rises again and after the removal of acid stimulus. May act as a sour taste receptor in gustatory cells; however, its contribution to sour taste perception is unclear in vivo and may be indirect. This Mus musculus (Mouse) protein is Polycystin-1-like protein 3.